A 282-amino-acid chain; its full sequence is Bifunctional protein FolD (282 aa).

NADP(+) contacts are provided by residues 164–166 (GRS) and serine 189.

The protein belongs to the tetrahydrofolate dehydrogenase/cyclohydrolase family. As to quaternary structure, homodimer.

The enzyme catalyses (6R)-5,10-methylene-5,6,7,8-tetrahydrofolate + NADP(+) = (6R)-5,10-methenyltetrahydrofolate + NADPH. It catalyses the reaction (6R)-5,10-methenyltetrahydrofolate + H2O = (6R)-10-formyltetrahydrofolate + H(+). The protein operates within one-carbon metabolism; tetrahydrofolate interconversion. Functionally, catalyzes the oxidation of 5,10-methylenetetrahydrofolate to 5,10-methenyltetrahydrofolate and then the hydrolysis of 5,10-methenyltetrahydrofolate to 10-formyltetrahydrofolate. This Streptococcus suis (strain 05ZYH33) protein is Bifunctional protein FolD.